Consider the following 739-residue polypeptide: Xylosyl- and glucuronyltransferase LARGE2s (739 aa).

Over 1 to 10 the chain is Cytoplasmic; it reads MLCSWRVKLK. A helical; Signal-anchor for type II membrane protein transmembrane segment spans residues 11–31; it reads LLLATITLAVLLSWLYLFVGS. Over 32-739 the chain is Lumenal; that stretch reads LEYGRFLLLP…LKYLTAERNL (708 aa). Positions 80–105 are disordered; that stretch reads AEGSDGNPQWAASAEDGPPLGGERNN. Asn-105, Asn-131, and Asn-217 each carry an N-linked (GlcNAc...) asparagine glycan. The tract at residues 121-396 is xylosyltransferase activity; it reads LHVAIVCAGH…FLEYDGNLLR (276 aa). Residues Asp-225 and Asp-227 each coordinate Mn(2+). Asn-255 carries an N-linked (GlcNAc...) asparagine glycan. Residues 397–739 form a glucuronyltransferase activity region; that stretch reads RELFGCASLP…LKYLTAERNL (343 aa). Mn(2+)-binding residues include Asp-546 and Asp-548.

The protein in the C-terminal section; belongs to the glycosyltransferase 49 family. It in the N-terminal section; belongs to the glycosyltransferase 8 family. Mn(2+) serves as cofactor.

The protein resides in the golgi apparatus membrane. The enzyme catalyses 3-O-[beta-D-GlcA-(1-&gt;3)-beta-D-Xyl-(1-&gt;4)-Rib-ol-P-Rib-ol-P-3-beta-D-GalNAc-(1-&gt;3)-beta-D-GlcNAc-(1-&gt;4)-(O-6-P-alpha-D-Man)]-Thr-[protein] + UDP-alpha-D-xylose = 3-O-[alpha-D-Xyl-(1-&gt;3)-beta-D-GlcA-(1-&gt;4)-beta-D-Xyl-(1-&gt;4)-Rib-ol-P-Rib-ol-P-3-beta-D-GalNAc-(1-&gt;3)-beta-D-GlcNAc-(1-&gt;4)-(O-6-P-alpha-D-Man)]-Thr-[protein] + UDP + H(+). The catalysed reaction is 3-O-{(1-&gt;[3)-alpha-D-Xyl-(1-&gt;3)-beta-D-GlcA-(1-&gt;](n)-4)-beta-D-Xyl-(1-&gt;4)-Rib-ol-P-Rib-ol-P-3-beta-D-GalNAc-(1-&gt;3)-beta-D-GlcNAc-(1-&gt;4)-O-6-P-alpha-D-Man}-L-Thr-[protein] + UDP-alpha-D-glucuronate = 3-O-{beta-D-GlcA-(1-&gt;[3)-alpha-D-Xyl-(1-&gt;3)-beta-D-GlcA-(1-&gt;](n)-4)-beta-D-Xyl-(1-&gt;4)-Rib-ol-P-Rib-ol-P-3-beta-D-GalNAc-(1-&gt;3)-beta-D-GlcNAc-(1-&gt;4)-O-6-P-alpha-D-Man}-L-Thr-[protein] + UDP + H(+). It carries out the reaction 3-O-{beta-D-GlcA-(1-&gt;[3)-alpha-D-Xyl-(1-&gt;3)-beta-D-GlcA-(1-&gt;](n)-4)-beta-D-Xyl-(1-&gt;4)-Rib-ol-P-Rib-ol-P-3-beta-D-GalNAc-(1-&gt;3)-beta-D-GlcNAc-(1-&gt;4)-O-6-P-alpha-D-Man}-L-Thr-[protein] + UDP-alpha-D-xylose = 3-O-{(1-&gt;[3)-alpha-D-Xyl-(1-&gt;3)-beta-D-GlcA-(1-&gt;](n+1)-4)-beta-D-Xyl-(1-&gt;4)-Rib-ol-P-Rib-ol-P-3-beta-D-GalNAc-(1-&gt;3)-beta-D-GlcNAc-(1-&gt;4)-O-6-P-alpha-D-Man}-L-Thr-[protein] + UDP + H(+). It participates in protein modification; protein glycosylation. In terms of biological role, bifunctional glycosyltransferase with both alpha-1,3-xylosyltransferase and beta-1,3-glucuronyltransferase activities involved in the maturation of alpha-dystroglycan (DAG1) by glycosylation leading to DAG1 binding to laminin G-like domain-containing extracellular proteins with high affinity and in a phosphorylated-O-mannosyl trisaccharide dependent manner. Elongates the glucuronyl-beta-1,4-xylose-beta disaccharide primer structure by adding repeating units [-3-Xylose-alpha-1,3-GlcA-beta-1-] to produce a heteropolysaccharide. Supports the maturation of DAG1 more effectively than LARGE1. In addition, can modify both heparan sulfate (HS)- and chondroitin/dermatan sulfate (CS/DS)-proteoglycans (PGs), namely GPC4, with a glycosaminoglycan (GAG)-like polysaccharide composed of xylose and glucuronic acid to confer laminin binding. The chain is Xylosyl- and glucuronyltransferase LARGE2s from Gallus gallus (Chicken).